Reading from the N-terminus, the 415-residue chain is Zona pellucida-like domain-containing protein 1 (415 aa).

An N-terminal signal peptide occupies residues M1–A19. Residues Q20–S372 are Extracellular-facing. The region spanning Y43–D320 is the ZP domain. Cystine bridges form between C44–C155 and C79–C104. Residues N121 and N164 are each glycosylated (N-linked (GlcNAc...) asparagine). 2 cysteine pairs are disulfide-bonded: C235-C296 and C255-C313. A disordered region spans residues R323 to P360. Polar residues-rich tracts occupy residues T325–A336 and T350–S359. The helical transmembrane segment at A373–L393 threads the bilayer. Topologically, residues A394–D415 are cytoplasmic.

Proteolytically cleaved before the transmembrane segment to yield the secreted form found in the extracellular matrix of the cupula. In terms of tissue distribution, detected in placenta, kidney, lung, pancreas and at very low level in other tissues.

It is found in the cytoplasmic vesicle membrane. The protein localises to the secreted. Its subcellular location is the extracellular space. It localises to the extracellular matrix. Glycoprotein which is a component of the gelatinous extracellular matrix in the cupulae of the vestibular organ. This is Zona pellucida-like domain-containing protein 1 (ZPLD1) from Homo sapiens (Human).